A 455-amino-acid chain; its full sequence is Enolase (455 aa).

A (2R)-2-phosphoglycerate-binding site is contributed by Q166. E208 acts as the Proton donor in catalysis. Mg(2+)-binding residues include D249, E311, and D338. Positions 363, 392, 393, and 414 each coordinate (2R)-2-phosphoglycerate. The active-site Proton acceptor is the K363.

The protein belongs to the enolase family. The cofactor is Mg(2+).

The protein localises to the cytoplasm. It localises to the secreted. Its subcellular location is the cell surface. It catalyses the reaction (2R)-2-phosphoglycerate = phosphoenolpyruvate + H2O. It participates in carbohydrate degradation; glycolysis; pyruvate from D-glyceraldehyde 3-phosphate: step 4/5. In terms of biological role, catalyzes the reversible conversion of 2-phosphoglycerate (2-PG) into phosphoenolpyruvate (PEP). It is essential for the degradation of carbohydrates via glycolysis. The protein is Enolase of Mycoplasma mobile (strain ATCC 43663 / 163K / NCTC 11711) (Mesomycoplasma mobile).